The sequence spans 420 residues: 3-isopropylmalate dehydratase large subunit (420 aa).

[4Fe-4S] cluster-binding residues include Cys301, Cys361, and Cys364.

This sequence belongs to the aconitase/IPM isomerase family. LeuC type 2 subfamily. In terms of assembly, heterodimer of LeuC and LeuD. It depends on [4Fe-4S] cluster as a cofactor.

It catalyses the reaction (2R,3S)-3-isopropylmalate = (2S)-2-isopropylmalate. The protein operates within amino-acid biosynthesis; L-leucine biosynthesis; L-leucine from 3-methyl-2-oxobutanoate: step 2/4. Functionally, catalyzes the isomerization between 2-isopropylmalate and 3-isopropylmalate, via the formation of 2-isopropylmaleate. In Desulfovibrio desulfuricans (strain ATCC 27774 / DSM 6949 / MB), this protein is 3-isopropylmalate dehydratase large subunit.